We begin with the raw amino-acid sequence, 267 residues long: Diphthine--ammonia ligase (267 aa).

Position 97 is a phosphotyrosine (Tyr-97).

This sequence belongs to the Diphthine--ammonia ligase family.

It carries out the reaction diphthine-[translation elongation factor 2] + NH4(+) + ATP = diphthamide-[translation elongation factor 2] + AMP + diphosphate + H(+). It participates in protein modification; peptidyl-diphthamide biosynthesis. Functionally, amidase that catalyzes the last step of diphthamide biosynthesis using ammonium and ATP. Diphthamide biosynthesis consists in the conversion of an L-histidine residue in the translation elongation factor eEF-2 (EEF2) to diphthamide. This Rattus norvegicus (Rat) protein is Diphthine--ammonia ligase (Dph6).